The chain runs to 103 residues: MYAIVKTGGKQYKVSEGDVLFVEKLEANAGDVVTLNEVLACSKDGELKLGSPVVEGASVQAKVVEQGKAKKVIVFKYKAKKDYRRKQGHRQSYTKIVVEKINA.

The protein belongs to the bacterial ribosomal protein bL21 family. In terms of assembly, part of the 50S ribosomal subunit. Contacts protein L20.

In terms of biological role, this protein binds to 23S rRNA in the presence of protein L20. The sequence is that of Large ribosomal subunit protein bL21 from Clostridioides difficile (strain 630) (Peptoclostridium difficile).